Reading from the N-terminus, the 594-residue chain is Beta-mannosyltransferase 3 (594 aa).

Residues 1 to 6 lie on the Cytoplasmic side of the membrane; that stretch reads MRIRSN. Residues 7–27 traverse the membrane as a helical segment; sequence VLLLSTAGALALVWFAVVFSW. Over 28 to 594 the chain is Extracellular; it reads DDKSIFGIPT…KDEVKDTKAK (567 aa). N-linked (GlcNAc...) asparagine glycosylation is present at N305. Residues 512 to 594 adopt a coiled-coil conformation; the sequence is VTRGEEDRLK…KDEVKDTKAK (83 aa). Over residues 517–558 the composition is skewed to basic and acidic residues; it reads EDRLKNKEKERKIEEKRKKEEERKKKEEEKKKKEEEEKKKKE. Residues 517-564 are disordered; that stretch reads EDRLKNKEKERKIEEKRKKEEERKKKEEEKKKKEEEEKKKKEEEEEEE.

This sequence belongs to the BMT family.

The protein localises to the membrane. Its function is as follows. Beta-mannosyltransferase involved in cell wall biosynthesis. In Komagataella phaffii (strain ATCC 76273 / CBS 7435 / CECT 11047 / NRRL Y-11430 / Wegner 21-1) (Yeast), this protein is Beta-mannosyltransferase 3 (BMT3).